The chain runs to 827 residues: Villin-1 (827 aa).

The necessary for homodimerization stretch occupies residues 1–126 (MTKLNAQVKG…IRKGGVASGM (126 aa)). The tract at residues 1-734 (MTKLNAQVKG…YDDLKAELGN (734 aa)) is core. Residues 27–76 (MQMVPVPSSTFGSFFDGDCYVVLAIHKTSSTLSYDIHYWIGQDSSQDEQG) form a Gelsolin-like 1 repeat. LPA/PIP2-binding site stretches follow at residues 112–119 (KQGLVIRK) and 138–146 (RLLHVKGKR). 2 Gelsolin-like repeats span residues 148–188 (VLAG…MERL) and 265–309 (LVVR…QERS). S366 bears the Phosphoserine mark. 3 Gelsolin-like repeats span residues 407-457 (DLEL…DEIA), 528-568 (TKAF…DERE), and 631-672 (FLAT…EEKK). Phosphoserine occurs at positions 735 and 776. The tract at residues 735 to 827 (SGDWSQIADE…QNIKKEKGLF (93 aa)) is headpiece. Residues 761–827 (SGPLPTFPLE…QNIKKEKGLF (67 aa)) form the HP domain. An LPA/PIP2-binding site 3 region spans residues 816–824 (KQQNIKKEK).

The protein belongs to the villin/gelsolin family. In terms of assembly, monomer. Homodimer; homodimerization is necessary for actin-bundling. Associates with F-actin; phosphorylation at tyrosine residues decreases the association with F-actin. Interacts (phosphorylated at C-terminus tyrosine phosphorylation sites) with PLCG1 (via the SH2 domains). Interacts (phosphorylated form) with PLCG1; the interaction is enhanced by hepatocyte growth factor (HGF). Post-translationally, phosphorylated on tyrosine residues by SRC. The unphosphorylated form increases the initial rate of actin-nucleating activity, whereas the tyrosine phosphorylated form inhibits actin-nucleating activity, enhances actin-bundling activity and enhances actin-severing activity by reducing high Ca(2+) requirements. The tyrosine phosphorylated form does not regulate actin-capping activity. Tyrosine phosphorylation is essential for cell migration: tyrosine phosphorylation sites in the N-terminus half regulate actin reorganization and cell morphology, whereas tyrosine phosphorylation sites in the C-terminus half regulate cell migration via interaction with PLCG1. Tyrosine phosphorylation is induced by epidermal growth factor (EGF) and stimulates cell migration. In terms of tissue distribution, expressed in small intestin, colon, kidney and enterocytes (at protein level).

The protein localises to the cytoplasm. Its subcellular location is the cytoskeleton. It localises to the cell projection. It is found in the microvillus. The protein resides in the lamellipodium. The protein localises to the ruffle. Its subcellular location is the filopodium tip. It localises to the filopodium. Functionally, epithelial cell-specific Ca(2+)-regulated actin-modifying protein that modulates the reorganization of microvillar actin filaments. Plays a role in the actin nucleation, actin filament bundle assembly, actin filament capping and severing. Binds phosphatidylinositol 4,5-bisphosphate (PIP2) and lysophosphatidic acid (LPA); binds LPA with higher affinity than PIP2. Binding to LPA increases its phosphorylation by SRC and inhibits all actin-modifying activities. Binding to PIP2 inhibits actin-capping and -severing activities but enhances actin-bundling activity. Regulates the intestinal epithelial cell morphology, cell invasion, cell migration and apoptosis. Protects against apoptosis induced by dextran sodium sulfate (DSS) in the gastrointestinal epithelium. Appears to regulate cell death by maintaining mitochondrial integrity. Enhances hepatocyte growth factor (HGF)-induced epithelial cell motility, chemotaxis and wound repair. Upon S.flexneri cell infection, its actin-severing activity enhances actin-based motility of the bacteria and plays a role during the dissemination. The sequence is that of Villin-1 (Vil1) from Mus musculus (Mouse).